Reading from the N-terminus, the 637-residue chain is Chaperone protein HtpG (637 aa).

An a; substrate-binding region spans residues 1–345; that stretch reads MSQQETHGFQ…SNDLPLNVSR (345 aa). Residues 346 to 562 are b; it reads EILQDNHVTK…EGEMSTQMIK (217 aa). The segment at 563–637 is c; it reads LMQAAGQPVP…MNQMLLANMK (75 aa).

The protein belongs to the heat shock protein 90 family. As to quaternary structure, homodimer.

Its subcellular location is the cytoplasm. In terms of biological role, molecular chaperone. Has ATPase activity. The chain is Chaperone protein HtpG from Shewanella baltica (strain OS185).